Consider the following 1168-residue polypeptide: Carbamoyl phosphate synthase arginine-specific large chain, mitochondrial (1168 aa).

Residues 1 to 51 (MLSTVHKAGRAPALLRHGRRVPVQASQLRALTSGAQNTSIFQTQANAAQRL) constitute a mitochondrion transit peptide. A carboxyphosphate synthetic domain region spans residues 86–483 (RDHVDVKKVL…SFQKAIRQVD (398 aa)). ATP-binding positions include Arg213, 243 to 298 (ANKI…WKEV), Arg253, Gly259, Gly260, Lys290, Leu292, Glu297, Gly323, Ile324, His325, Gln366, and Glu380. An ATP-grasp 1 domain is found at 217-409 (AKALEEINIP…LAYTAAKIGL (193 aa)). Mg(2+) is bound by residues Gln366, Glu380, and Asn382. Mn(2+) contacts are provided by Gln366, Glu380, and Asn382. The interval 484 to 628 (PRFVGFQGDK…YTTYNASSHD (145 aa)) is oligomerization domain. The interval 629 to 1017 (VTFEDKGTVI…AYWASLQSAM (389 aa)) is carbamoyl phosphate synthetic domain. In terms of domain architecture, ATP-grasp 2 spans 754 to 951 (SEILDSIGVD…FIDAATKALV (198 aa)). ATP is bound by residues 780–837 (AEEV…AQEI), Arg790, Lys829, Ile831, Glu836, Gly861, Val862, His863, Ser864, Gln904, and Glu922. Mg(2+)-binding residues include Gln904, Glu922, and Asn924. Positions 904, 922, and 924 each coordinate Mn(2+). Residues 1018–1152 (NFRVPEPGEG…AEKLPRPEGI (135 aa)) form an allosteric domain region. In terms of domain architecture, MGS-like spans 1019-1168 (FRVPEPGEGL…WSEFIGGKPL (150 aa)).

The protein belongs to the CarB family. In terms of assembly, heterodimer composed of 2 chains; the small (or glutamine) chain promotes the hydrolysis of glutamine to ammonia, which is used by the large (or ammonia) chain to synthesize carbamoyl phosphate. Requires Mg(2+) as cofactor. Mn(2+) is required as a cofactor.

The protein localises to the mitochondrion matrix. It catalyses the reaction hydrogencarbonate + L-glutamine + 2 ATP + H2O = carbamoyl phosphate + L-glutamate + 2 ADP + phosphate + 2 H(+). The catalysed reaction is hydrogencarbonate + NH4(+) + 2 ATP = carbamoyl phosphate + 2 ADP + phosphate + 2 H(+). It participates in amino-acid biosynthesis; L-arginine biosynthesis; carbamoyl phosphate from bicarbonate: step 1/1. In terms of biological role, large subunit of the arginine-specific carbamoyl phosphate synthase (CPSase). CPSase catalyzes the formation of carbamoyl phosphate from the ammonia moiety of glutamine, hydrogencarbonate, and phosphate donated by ATP, the first step of the arginine biosynthetic pathway. The large subunit (synthetase) binds the substrates ammonia (free or transferred from glutamine from the small subunit), hydrogencarbonate and ATP and carries out an ATP-coupled ligase reaction, activating hydrogencarbonate by forming carboxy phosphate which reacts with ammonia to form carbamoyl phosphate. The polypeptide is Carbamoyl phosphate synthase arginine-specific large chain, mitochondrial (arg-3) (Neurospora crassa (strain ATCC 24698 / 74-OR23-1A / CBS 708.71 / DSM 1257 / FGSC 987)).